Reading from the N-terminus, the 610-residue chain is GPI transamidase component GPI16 (610 aa).

The first 19 residues, 1–19 (MILTLAYFMLGTLLLGVFA), serve as a signal peptide directing secretion. Residues 20-551 (EDTVSQIGIN…STPDFSMPYN (532 aa)) are Lumenal-facing. Residue Asn-184 is glycosylated (N-linked (GlcNAc...) asparagine). A helical membrane pass occupies residues 552 to 572 (VIILTSTIMGLIFGMLYNLMV). Residues 573–610 (KRMVTVEEADKITLQSGLKYKLLKLKEKFLGKKKTKTD) are Cytoplasmic-facing.

The protein belongs to the PIGT family. In terms of assembly, forms a complex with CDC91, GPI17, GPI8 and GAA1. In terms of processing, the disulfide bond between GPI8 and GPI16 is important for normal enzyme activity.

It is found in the endoplasmic reticulum membrane. It functions in the pathway glycolipid biosynthesis; glycosylphosphatidylinositol-anchor biosynthesis. In terms of biological role, component of the GPI transamidase complex. Involved in transfer of GPI to proteins. The sequence is that of GPI transamidase component GPI16 (GPI16) from Saccharomyces cerevisiae (strain ATCC 204508 / S288c) (Baker's yeast).